A 240-amino-acid chain; its full sequence is Aspartate/glutamate leucyltransferase (240 aa).

It belongs to the R-transferase family. Bpt subfamily.

It localises to the cytoplasm. The enzyme catalyses N-terminal L-glutamyl-[protein] + L-leucyl-tRNA(Leu) = N-terminal L-leucyl-L-glutamyl-[protein] + tRNA(Leu) + H(+). It catalyses the reaction N-terminal L-aspartyl-[protein] + L-leucyl-tRNA(Leu) = N-terminal L-leucyl-L-aspartyl-[protein] + tRNA(Leu) + H(+). Functions in the N-end rule pathway of protein degradation where it conjugates Leu from its aminoacyl-tRNA to the N-termini of proteins containing an N-terminal aspartate or glutamate. The protein is Aspartate/glutamate leucyltransferase of Gluconobacter oxydans (strain 621H) (Gluconobacter suboxydans).